Consider the following 373-residue polypeptide: D-alanine--D-alanine ligase (373 aa).

One can recognise an ATP-grasp domain in the interval 156–363 (KKLLAADGLP…YPTLLATMIE (208 aa)). 184–239 (CERLGLPVFVKPARGGSSIGVSRVSSWDQLPAAVARARRHDPKVIVEAAISGRELE) contributes to the ATP binding site. Mg(2+) is bound by residues D318, E330, and N332.

This sequence belongs to the D-alanine--D-alanine ligase family. Mg(2+) serves as cofactor. It depends on Mn(2+) as a cofactor.

The protein resides in the cytoplasm. It catalyses the reaction 2 D-alanine + ATP = D-alanyl-D-alanine + ADP + phosphate + H(+). It functions in the pathway cell wall biogenesis; peptidoglycan biosynthesis. In terms of biological role, cell wall formation. The sequence is that of D-alanine--D-alanine ligase from Mycobacterium bovis (strain BCG / Pasteur 1173P2).